A 143-amino-acid polypeptide reads, in one-letter code: Large ribosomal subunit protein uL15 (143 aa).

Basic residues-rich tracts occupy residues 1–13 (MIRKSKKITKMRG) and 23–38 (KKHRGAGHRGGRGNAG). The tract at residues 1–38 (MIRKSKKITKMRGSRTCGYGEAKKHRGAGHRGGRGNAG) is disordered.

It belongs to the universal ribosomal protein uL15 family. Part of the 50S ribosomal subunit.

In terms of biological role, binds to the 23S rRNA. In Methanococcus maripaludis (strain C6 / ATCC BAA-1332), this protein is Large ribosomal subunit protein uL15.